A 160-amino-acid chain; its full sequence is Putative UPF0479 protein YIL177W-A (160 aa).

The next 2 membrane-spanning stretches (helical) occupy residues 39–59 (IVFC…KVLQ) and 136–156 (VPMI…ISQH).

Belongs to the UPF0479 family.

It is found in the membrane. The sequence is that of Putative UPF0479 protein YIL177W-A from Saccharomyces cerevisiae (strain ATCC 204508 / S288c) (Baker's yeast).